Here is a 155-residue protein sequence, read N- to C-terminus: Ribosomal RNA large subunit methyltransferase H (155 aa).

Residues leucine 72, glycine 103, and leucine 122 to leucine 127 each bind S-adenosyl-L-methionine.

This sequence belongs to the RNA methyltransferase RlmH family. Homodimer.

The protein resides in the cytoplasm. The catalysed reaction is pseudouridine(1915) in 23S rRNA + S-adenosyl-L-methionine = N(3)-methylpseudouridine(1915) in 23S rRNA + S-adenosyl-L-homocysteine + H(+). Its function is as follows. Specifically methylates the pseudouridine at position 1915 (m3Psi1915) in 23S rRNA. In Salmonella choleraesuis (strain SC-B67), this protein is Ribosomal RNA large subunit methyltransferase H.